Reading from the N-terminus, the 237-residue chain is Class B acid phosphatase (237 aa).

An N-terminal signal peptide occupies residues 1–23; that stretch reads MRKVTLTLSAIALALSLNGAAMA. The active-site Nucleophile is Asp69. Residues Asp69 and Asp71 each coordinate Mg(2+). The active-site Proton donor is Asp71. Substrate is bound by residues 137-138 and Lys177; that span reads TG. Mg(2+) is bound at residue Asp192.

Belongs to the class B bacterial acid phosphatase family. In terms of assembly, homotetramer. It depends on Mg(2+) as a cofactor.

The protein localises to the periplasm. It carries out the reaction a phosphate monoester + H2O = an alcohol + phosphate. In terms of biological role, dephosphorylates several organic phosphate monoesters. Also has a phosphotransferase activity catalyzing the transfer of low-energy phosphate groups from organic phosphate monoesters to free hydroxyl groups of various organic compounds. In Proteus mirabilis (strain HI4320), this protein is Class B acid phosphatase.